Reading from the N-terminus, the 152-residue chain is Large-conductance mechanosensitive channel (152 aa).

The next 3 helical transmembrane spans lie at 21-41 (IDLA…DSLV), 44-64 (VVMP…NKFL), and 92-112 (GNFI…FWMV).

It belongs to the MscL family. As to quaternary structure, homopentamer.

Its subcellular location is the cell inner membrane. Its function is as follows. Channel that opens in response to stretch forces in the membrane lipid bilayer. May participate in the regulation of osmotic pressure changes within the cell. This Bordetella bronchiseptica (strain ATCC BAA-588 / NCTC 13252 / RB50) (Alcaligenes bronchisepticus) protein is Large-conductance mechanosensitive channel.